The chain runs to 220 residues: Peptidyl-tRNA hydrolase (220 aa).

Residue tyrosine 14 coordinates tRNA. Histidine 19 functions as the Proton acceptor in the catalytic mechanism. TRNA is bound by residues phenylalanine 66, asparagine 68, and asparagine 114. The interval 184 to 220 is disordered; the sequence is QAFNSTDLRPRPEPVPAPQPADVSGPQETGPAERPEV.

It belongs to the PTH family. In terms of assembly, monomer.

The protein resides in the cytoplasm. The enzyme catalyses an N-acyl-L-alpha-aminoacyl-tRNA + H2O = an N-acyl-L-amino acid + a tRNA + H(+). Its function is as follows. Hydrolyzes ribosome-free peptidyl-tRNAs (with 1 or more amino acids incorporated), which drop off the ribosome during protein synthesis, or as a result of ribosome stalling. Catalyzes the release of premature peptidyl moieties from peptidyl-tRNA molecules trapped in stalled 50S ribosomal subunits, and thus maintains levels of free tRNAs and 50S ribosomes. This is Peptidyl-tRNA hydrolase from Deinococcus deserti (strain DSM 17065 / CIP 109153 / LMG 22923 / VCD115).